Consider the following 265-residue polypeptide: Protein B8 (265 aa).

This is Protein B8 (B8) from Homo sapiens (Human).